A 396-amino-acid chain; its full sequence is Elongation factor Tu (396 aa).

The tr-type G domain occupies 11 to 205 (KPHVNIGTIG…TVDEYIPTPE (195 aa)). The interval 20-27 (GHVDHGKT) is G1. Residue 20-27 (GHVDHGKT) participates in GTP binding. Threonine 27 contributes to the Mg(2+) binding site. A G2 region spans residues 61-65 (GITIN). Residues 82-85 (DAPG) form a G3 region. GTP is bound by residues 82–86 (DAPGH) and 137–140 (NKVD). Residues 137–140 (NKVD) are G4. The segment at 175-177 (SAL) is G5.

This sequence belongs to the TRAFAC class translation factor GTPase superfamily. Classic translation factor GTPase family. EF-Tu/EF-1A subfamily. In terms of assembly, monomer.

It is found in the cytoplasm. The enzyme catalyses GTP + H2O = GDP + phosphate + H(+). GTP hydrolase that promotes the GTP-dependent binding of aminoacyl-tRNA to the A-site of ribosomes during protein biosynthesis. The polypeptide is Elongation factor Tu (Lactobacillus gasseri (strain ATCC 33323 / DSM 20243 / BCRC 14619 / CIP 102991 / JCM 1131 / KCTC 3163 / NCIMB 11718 / NCTC 13722 / AM63)).